A 187-amino-acid polypeptide reads, in one-letter code: Ribosome-recycling factor (187 aa).

It belongs to the RRF family.

It localises to the cytoplasm. Its function is as follows. Responsible for the release of ribosomes from messenger RNA at the termination of protein biosynthesis. May increase the efficiency of translation by recycling ribosomes from one round of translation to another. This Ruegeria sp. (strain TM1040) (Silicibacter sp.) protein is Ribosome-recycling factor.